The chain runs to 122 residues: Large ribosomal subunit protein bL12 (122 aa).

It belongs to the bacterial ribosomal protein bL12 family. As to quaternary structure, homodimer. Part of the ribosomal stalk of the 50S ribosomal subunit. Forms a multimeric L10(L12)X complex, where L10 forms an elongated spine to which 2 to 4 L12 dimers bind in a sequential fashion. Binds GTP-bound translation factors.

Functionally, forms part of the ribosomal stalk which helps the ribosome interact with GTP-bound translation factors. Is thus essential for accurate translation. This chain is Large ribosomal subunit protein bL12, found in Staphylococcus haemolyticus (strain JCSC1435).